The primary structure comprises 419 residues: Multifunctional CCA protein (419 aa).

Residues G8 and R11 each coordinate ATP. 2 residues coordinate CTP: G8 and R11. Residues D21 and D23 each contribute to the Mg(2+) site. ATP is bound by residues R91, R137, and R140. The CTP site is built by R91, R137, and R140. One can recognise an HD domain in the interval 228-334; that stretch reads SFLHTMLVLQ…IKLFNKLDVW (107 aa).

It belongs to the tRNA nucleotidyltransferase/poly(A) polymerase family. Bacterial CCA-adding enzyme type 1 subfamily. In terms of assembly, monomer. Can also form homodimers and oligomers. It depends on Mg(2+) as a cofactor. Ni(2+) is required as a cofactor.

The catalysed reaction is a tRNA precursor + 2 CTP + ATP = a tRNA with a 3' CCA end + 3 diphosphate. It carries out the reaction a tRNA with a 3' CCA end + 2 CTP + ATP = a tRNA with a 3' CCACCA end + 3 diphosphate. Its function is as follows. Catalyzes the addition and repair of the essential 3'-terminal CCA sequence in tRNAs without using a nucleic acid template. Adds these three nucleotides in the order of C, C, and A to the tRNA nucleotide-73, using CTP and ATP as substrates and producing inorganic pyrophosphate. tRNA 3'-terminal CCA addition is required both for tRNA processing and repair. Also involved in tRNA surveillance by mediating tandem CCA addition to generate a CCACCA at the 3' terminus of unstable tRNAs. While stable tRNAs receive only 3'-terminal CCA, unstable tRNAs are marked with CCACCA and rapidly degraded. The chain is Multifunctional CCA protein from Mannheimia succiniciproducens (strain KCTC 0769BP / MBEL55E).